We begin with the raw amino-acid sequence, 95 residues long: Aspartyl/glutamyl-tRNA(Asn/Gln) amidotransferase subunit C (95 aa).

Belongs to the GatC family. In terms of assembly, heterotrimer of A, B and C subunits.

It carries out the reaction L-glutamyl-tRNA(Gln) + L-glutamine + ATP + H2O = L-glutaminyl-tRNA(Gln) + L-glutamate + ADP + phosphate + H(+). The enzyme catalyses L-aspartyl-tRNA(Asn) + L-glutamine + ATP + H2O = L-asparaginyl-tRNA(Asn) + L-glutamate + ADP + phosphate + 2 H(+). Allows the formation of correctly charged Asn-tRNA(Asn) or Gln-tRNA(Gln) through the transamidation of misacylated Asp-tRNA(Asn) or Glu-tRNA(Gln) in organisms which lack either or both of asparaginyl-tRNA or glutaminyl-tRNA synthetases. The reaction takes place in the presence of glutamine and ATP through an activated phospho-Asp-tRNA(Asn) or phospho-Glu-tRNA(Gln). The protein is Aspartyl/glutamyl-tRNA(Asn/Gln) amidotransferase subunit C of Rhizobium etli (strain ATCC 51251 / DSM 11541 / JCM 21823 / NBRC 15573 / CFN 42).